The sequence spans 360 residues: Phenylalanine--tRNA ligase alpha subunit (360 aa).

Glu-255 serves as a coordination point for Mg(2+).

It belongs to the class-II aminoacyl-tRNA synthetase family. Phe-tRNA synthetase alpha subunit type 1 subfamily. In terms of assembly, tetramer of two alpha and two beta subunits. Mg(2+) serves as cofactor.

The protein resides in the cytoplasm. It catalyses the reaction tRNA(Phe) + L-phenylalanine + ATP = L-phenylalanyl-tRNA(Phe) + AMP + diphosphate + H(+). The chain is Phenylalanine--tRNA ligase alpha subunit from Rhizorhabdus wittichii (strain DSM 6014 / CCUG 31198 / JCM 15750 / NBRC 105917 / EY 4224 / RW1) (Sphingomonas wittichii).